A 279-amino-acid chain; its full sequence is Zinc finger AN1 and C2H2 domain-containing stress-associated protein 11 (279 aa).

2 AN1-type zinc fingers span residues 7–55 and 95–145; these read PDLG…REDV and ATKK…KLPF. Zn(2+) is bound by residues Cys13, Cys18, Cys28, Cys31, Cys36, His39, His45, Cys47, Cys101, Cys106, Cys118, Cys121, Cys126, His129, His135, and Cys137. A disordered region spans residues 152–178; it reads STTRKEAKTTRPNKAHPSTSSSSSSSR. Low complexity predominate over residues 169-178; that stretch reads STSSSSSSSR. 2 consecutive C2H2-type zinc fingers follow at residues 213-236 and 250-273; these read EVCP…EKTH and DVCP…ERDH.

Its function is as follows. May be involved in environmental stress response. This is Zinc finger AN1 and C2H2 domain-containing stress-associated protein 11 (SAP11) from Arabidopsis thaliana (Mouse-ear cress).